A 268-amino-acid chain; its full sequence is Interleukin-1 alpha (268 aa).

Residues 1–112 (MAKVPDLFED…NTEEEIIKPR (112 aa)) constitute a propeptide that is removed on maturation. K82 carries the post-translational modification N6-acetyllysine. A nuclear localization signal (NLS) region spans residues 82–86 (KKRRL). A Phosphoserine modification is found at S87. Residues N102 and N141 are each glycosylated (N-linked (GlcNAc...) asparagine).

The protein belongs to the IL-1 family. Monomer. Interacts with TMED10; the interaction mediates the translocation from the cytoplasm into the ERGIC (endoplasmic reticulum-Golgi intermediate compartment) and thereby secretion. Interacts with IL1R1. Interacts with S100A13; this interaction is the first step in the export of IL1A, followed by direct translocation of this complex across the plasma membrane. Acetylated within its nuclear localization sequence, which impacts subcellular localization. In terms of processing, proteolytic processed by CAPN1 in a calcium-dependent manner. Cleavage from 31 kDa precursor to 18 kDa biologically active molecules. Post-translationally, phosphorylated. Phosphorylation greatly enhances susceptibility to digestion and promotes the conversion of pre-IL1A alpha to the biologically active IL1A.

The protein localises to the nucleus. The protein resides in the cytoplasm. It localises to the secreted. Functionally, cytokine constitutively present intracellularly in nearly all resting non-hematopoietic cells that plays an important role in inflammation and bridges the innate and adaptive immune systems. After binding to its receptor IL1R1 together with its accessory protein IL1RAP, forms the high affinity interleukin-1 receptor complex. Signaling involves the recruitment of adapter molecules such as MYD88, IRAK1 or IRAK4. In turn, mediates the activation of NF-kappa-B and the three MAPK pathways p38, p42/p44 and JNK pathways. Within the cell, acts as an alarmin and cell death results in its liberation in the extracellular space after disruption of the cell membrane to induce inflammation and alert the host to injury or damage. In addition to its role as a danger signal, which occurs when the cytokine is passively released by cell necrosis, directly senses DNA damage and acts as signal for genotoxic stress without loss of cell integrity. The protein is Interleukin-1 alpha (IL1A) of Bubalus carabanensis (Swamp type water buffalo).